We begin with the raw amino-acid sequence, 416 residues long: Glutamyl-tRNA reductase (416 aa).

Substrate contacts are provided by residues 49–52 (TCNR), Ser-105, 110–112 (EPQ), and Gln-116. The active-site Nucleophile is Cys-50. Residue 185-190 (GAGETI) participates in NADP(+) binding.

The protein belongs to the glutamyl-tRNA reductase family. Homodimer.

It catalyses the reaction (S)-4-amino-5-oxopentanoate + tRNA(Glu) + NADP(+) = L-glutamyl-tRNA(Glu) + NADPH + H(+). It functions in the pathway porphyrin-containing compound metabolism; protoporphyrin-IX biosynthesis; 5-aminolevulinate from L-glutamyl-tRNA(Glu): step 1/2. Catalyzes the NADPH-dependent reduction of glutamyl-tRNA(Glu) to glutamate 1-semialdehyde (GSA). This Shewanella pealeana (strain ATCC 700345 / ANG-SQ1) protein is Glutamyl-tRNA reductase.